The following is a 180-amino-acid chain: uncharacterized protein (180 aa).

Positions 1–31 (MSTYEEEHGIQQNSRDYQEVGGTSQEEQRRQ) are disordered. N-acetylserine is present on Ser-2. The segment at 109 to 153 (CSICYTNYLEDEYPLVVELPHCHHKFDLECLSVWLSRSTTCPLCR) adopts an RING-type zinc-finger fold.

This is an uncharacterized protein from Saccharomyces cerevisiae (strain ATCC 204508 / S288c) (Baker's yeast).